Here is a 293-residue protein sequence, read N- to C-terminus: tRNA-cytidine(32) 2-sulfurtransferase (293 aa).

The PP-loop motif motif lies at 62–67; sequence SGGKDS. 3 residues coordinate [4Fe-4S] cluster: C137, C140, and C228.

The protein belongs to the TtcA family. In terms of assembly, homodimer. It depends on Mg(2+) as a cofactor. [4Fe-4S] cluster is required as a cofactor.

The protein resides in the cytoplasm. It catalyses the reaction cytidine(32) in tRNA + S-sulfanyl-L-cysteinyl-[cysteine desulfurase] + AH2 + ATP = 2-thiocytidine(32) in tRNA + L-cysteinyl-[cysteine desulfurase] + A + AMP + diphosphate + H(+). It participates in tRNA modification. Functionally, catalyzes the ATP-dependent 2-thiolation of cytidine in position 32 of tRNA, to form 2-thiocytidine (s(2)C32). The sulfur atoms are provided by the cysteine/cysteine desulfurase (IscS) system. The chain is tRNA-cytidine(32) 2-sulfurtransferase from Brucella abortus (strain S19).